We begin with the raw amino-acid sequence, 499 residues long: Sensor histidine kinase PdtaS (499 aa).

The tract at residues 4–149 is GAF; the sequence is LGDLLAEHTM…PLEGAYLDCA (146 aa). The PAS-like stretch occupies residues 178 to 289; that stretch reads DGFIRLNEGG…TEVKRRDRAL (112 aa). Residues 298–493 form the Histidine kinase domain; it reads EIHHRVKNNL…DVVLRVPIGR (196 aa). H301 carries the post-translational modification Phosphohistidine; by autocatalysis.

In terms of processing, autophosphorylated.

It localises to the cytoplasm. It catalyses the reaction ATP + protein L-histidine = ADP + protein N-phospho-L-histidine.. Its function is as follows. Member of the two-component regulatory system PdtaR/PdtaS. This two-component system plays an essential role in mycobacterial adaptation to poor nutrient conditions. Nutrient deprivation results in increasing intracellular concentrations of cyclic diguanosine monophosphate (c-di-GMP), which binds to the PdtaS sensor and promotes its autophosphorylation, leading to the activation of the signaling cascade. The phosphate group is then transferred to PdtaR. This is Sensor histidine kinase PdtaS from Mycolicibacterium smegmatis (strain ATCC 700084 / mc(2)155) (Mycobacterium smegmatis).